The following is a 343-amino-acid chain: Methionine import ATP-binding protein MetN 3 (343 aa).

In terms of domain architecture, ABC transporter spans 2-241 (IELSNITKVF…PKTPLAQKFI (240 aa)). Position 38 to 45 (38 to 45 (GASGAGKS)) interacts with ATP.

It belongs to the ABC transporter superfamily. Methionine importer (TC 3.A.1.24) family. As to quaternary structure, the complex is composed of two ATP-binding proteins (MetN), two transmembrane proteins (MetI) and a solute-binding protein (MetQ).

Its subcellular location is the cell inner membrane. The enzyme catalyses L-methionine(out) + ATP + H2O = L-methionine(in) + ADP + phosphate + H(+). The catalysed reaction is D-methionine(out) + ATP + H2O = D-methionine(in) + ADP + phosphate + H(+). Its function is as follows. Part of the ABC transporter complex MetNIQ involved in methionine import. Responsible for energy coupling to the transport system. This is Methionine import ATP-binding protein MetN 3 from Pectobacterium atrosepticum (strain SCRI 1043 / ATCC BAA-672) (Erwinia carotovora subsp. atroseptica).